We begin with the raw amino-acid sequence, 304 residues long: uncharacterized protein (304 aa).

Catalysis depends on charge relay system residues Thr-58 and Tyr-121. Tyr-147 functions as the Proton donor in the catalytic mechanism. Lys-175 acts as the Schiff-base intermediate with substrate in catalysis.

It belongs to the DapA family. As to quaternary structure, homotetramer.

The protein localises to the cytoplasm. This is an uncharacterized protein from Halobacterium salinarum (strain ATCC 29341 / DSM 671 / R1).